The following is a 318-amino-acid chain: Ribonuclease Z (318 aa).

The Zn(2+) site is built by H62, H64, D66, H67, H144, D215, and H273. D66 (proton acceptor) is an active-site residue.

Belongs to the RNase Z family. In terms of assembly, homodimer. It depends on Zn(2+) as a cofactor.

It catalyses the reaction Endonucleolytic cleavage of RNA, removing extra 3' nucleotides from tRNA precursor, generating 3' termini of tRNAs. A 3'-hydroxy group is left at the tRNA terminus and a 5'-phosphoryl group is left at the trailer molecule.. Functionally, zinc phosphodiesterase, which displays some tRNA 3'-processing endonuclease activity. Probably involved in tRNA maturation, by removing a 3'-trailer from precursor tRNA. This is Ribonuclease Z from Prochlorococcus marinus (strain MIT 9313).